A 330-amino-acid polypeptide reads, in one-letter code: DNA-directed RNA polymerase subunit alpha (330 aa).

The alpha N-terminal domain (alpha-NTD) stretch occupies residues 1 to 231 (MAILAFQKPD…IYHFMLFSDE (231 aa)). Residues 253 to 330 (MRQLLKTKLV…DISKYKLDKE (78 aa)) form an alpha C-terminal domain (alpha-CTD) region.

The protein belongs to the RNA polymerase alpha chain family. Homodimer. The RNAP catalytic core consists of 2 alpha, 1 beta, 1 beta' and 1 omega subunit. When a sigma factor is associated with the core the holoenzyme is formed, which can initiate transcription.

The catalysed reaction is RNA(n) + a ribonucleoside 5'-triphosphate = RNA(n+1) + diphosphate. DNA-dependent RNA polymerase catalyzes the transcription of DNA into RNA using the four ribonucleoside triphosphates as substrates. This is DNA-directed RNA polymerase subunit alpha from Phocaeicola vulgatus (strain ATCC 8482 / DSM 1447 / JCM 5826 / CCUG 4940 / NBRC 14291 / NCTC 11154) (Bacteroides vulgatus).